The sequence spans 270 residues: Putative hydro-lyase Noca_0093 (270 aa).

This sequence belongs to the D-glutamate cyclase family.

The sequence is that of Putative hydro-lyase Noca_0093 from Nocardioides sp. (strain ATCC BAA-499 / JS614).